We begin with the raw amino-acid sequence, 444 residues long: MAAQVTEKLQDLHLNGQNGDAKANSTAVGQTEAGEAEDDSDDEKEDGNAAPEAGAGGAAKKKKRKSKKKKKGGAKVQSSPPRVPVSNLFPNNQYPEGEIVEYKNENSYRTTNEEKRYLDRMNNDFLQEYRQAAEVHRQVRQYAQRTIKPGQTLTEIAEGIEDAVRALTGHQGLEEGDNLKGGMGFPCGLSINHCAAHYTPNAGNKMVLQQGDVMKVDFGAHINGRIVDSAFTMTFDPVYDPLLEAVKDATNTGIREAGIDVRMSDIGAAIQEAMESYEVELNGTMYPVKCIRNLNGHNIDQHIIHGGKSVPIVKGSDQTKMEEGETFAIETFGSTGKGYVREDMETSHYALIPDAPSVPLRLSSAKNLLNVINKNFGTLPFCRRYLDRLGQEKYLLGLNNLVSSGIVQDYPPLCDVKGSYTAQFEHTILLRPTVKEVISRGDDY.

The tract at residues Met1–Asn92 is disordered. Over residues Asn15–Gly29 the composition is skewed to polar residues. The span at Gly34–Glu45 shows a compositional bias: acidic residues. Positions Ala59–Gly73 are enriched in basic residues. His197 lines the substrate pocket. Positions 217, 228, and 297 each coordinate a divalent metal cation. His305 contacts substrate. Residues Glu330 and Glu425 each coordinate a divalent metal cation.

This sequence belongs to the peptidase M24A family. Methionine aminopeptidase eukaryotic type 2 subfamily. It depends on Co(2+) as a cofactor. Zn(2+) is required as a cofactor. The cofactor is Mn(2+). Requires Fe(2+) as cofactor.

Its subcellular location is the cytoplasm. It carries out the reaction Release of N-terminal amino acids, preferentially methionine, from peptides and arylamides.. In terms of biological role, cotranslationally removes the N-terminal methionine from nascent proteins. The N-terminal methionine is often cleaved when the second residue in the primary sequence is small and uncharged (Met-Ala-, Cys, Gly, Pro, Ser, Thr, or Val). This is Methionine aminopeptidase 2-1 from Neosartorya fischeri (strain ATCC 1020 / DSM 3700 / CBS 544.65 / FGSC A1164 / JCM 1740 / NRRL 181 / WB 181) (Aspergillus fischerianus).